Reading from the N-terminus, the 228-residue chain is Large ribosomal subunit protein mL64 (228 aa).

Disordered stretches follow at residues 20–44 (PRSR…DREN) and 186–228 (QRKR…KPSS). Residues 98–207 (TMQESLRVQQ…KKEARIAAMA (110 aa)) are a coiled coil. A Nuclear localization signal motif is present at residues 184–200 (KQQRKRLKEERQRQKKE). Over residues 186-202 (QRKRLKEERQRQKKEAR) the composition is skewed to basic and acidic residues. Residues 212–228 (QDSAEAQDSAASGKPSS) show a composition bias toward low complexity.

This sequence belongs to the mitochondrion-specific ribosomal protein mL64 family. In terms of assembly, component of the mitochondrial ribosome large subunit (39S) which comprises a 16S rRNA and about 50 distinct proteins. Interacts with GADD45A, GADD45B and GADD45G. Interacts with NR4A1 via the NR4A1 AB domain. Interacts with ATAD3A and ATAD3B.

It is found in the mitochondrion. The protein resides in the nucleus. In terms of biological role, acts as a negative regulator of G1 to S cell cycle phase progression by inhibiting cyclin-dependent kinases. Inhibitory effects are additive with GADD45 proteins but also occur in the absence of GADD45 proteins. Acts as a repressor of the orphan nuclear receptor NR4A1 by inhibiting AB domain-mediated transcriptional activity. May be involved in the hormone-mediated regulation of NR4A1 transcriptional activity. May play a role in mitochondrial protein synthesis. In Rattus norvegicus (Rat), this protein is Large ribosomal subunit protein mL64 (Gadd45gip1).